Consider the following 301-residue polypeptide: tRNA pseudouridine synthase B (301 aa).

Asp47 (nucleophile) is an active-site residue.

The protein belongs to the pseudouridine synthase TruB family. Type 1 subfamily.

It catalyses the reaction uridine(55) in tRNA = pseudouridine(55) in tRNA. Responsible for synthesis of pseudouridine from uracil-55 in the psi GC loop of transfer RNAs. The protein is tRNA pseudouridine synthase B of Cereibacter sphaeroides (strain ATCC 17025 / ATH 2.4.3) (Rhodobacter sphaeroides).